The sequence spans 267 residues: Cilia- and flagella-associated protein 300 (267 aa).

It belongs to the CFAP300 family. Interacts with DNAAF2. In terms of tissue distribution, expressed in nasal epithelial cells.

It is found in the cytoplasm. Its subcellular location is the cytoskeleton. The protein localises to the cilium axoneme. In terms of biological role, cilium- and flagellum-specific protein that plays a role in axonemal structure organization and motility. May play a role in outer and inner dynein arm assembly. The sequence is that of Cilia- and flagella-associated protein 300 from Homo sapiens (Human).